The following is a 412-amino-acid chain: Probable serine/threonine-protein kinase PBL10 (412 aa).

A lipid anchor (N-myristoyl glycine) is attached at Gly-2. Cys-4 carries S-palmitoyl cysteine lipidation. The tract at residues 15-45 is disordered; the sequence is GASPKYMSSEANDSLGSKSSSVSIRTNPRTE. Over residues 23–43 the composition is skewed to polar residues; sequence SEANDSLGSKSSSVSIRTNPR. The residue at position 58 (Thr-58) is a Phosphothreonine. The 288-residue stretch at 69–356 folds into the Protein kinase domain; the sequence is FRPDSVLGEG…VVSHLEHIQT (288 aa). ATP is bound by residues 75-83 and Lys-107; that span reads LGEGGFGSV. Tyr-152 is subject to Phosphotyrosine. Catalysis depends on Asp-204, which acts as the Proton acceptor. Phosphoserine is present on residues Ser-208 and Ser-238. Residues Thr-239 and Thr-244 each carry the phosphothreonine modification. Tyr-252 bears the Phosphotyrosine mark.

The protein belongs to the protein kinase superfamily. Ser/Thr protein kinase family. In terms of assembly, interacts with the Xanthomonas campestris effector XopAC/AvrAC. As to expression, expressed in stomatal guard cells of leaves.

The protein resides in the cell membrane. It catalyses the reaction L-seryl-[protein] + ATP = O-phospho-L-seryl-[protein] + ADP + H(+). It carries out the reaction L-threonyl-[protein] + ATP = O-phospho-L-threonyl-[protein] + ADP + H(+). Its function is as follows. Possible bi-functional kinase. In vitro, it exhibits serine/threonine activity. In vivo, can phosphorylate tyrosine residues of limited substrates. May be involved in plant defense signaling. Required for full light-induced stomatal opening. The sequence is that of Probable serine/threonine-protein kinase PBL10 from Arabidopsis thaliana (Mouse-ear cress).